A 356-amino-acid chain; its full sequence is ATP-dependent 6-phosphofructokinase (356 aa).

ATP is bound by residues Gly15, 78–79 (KG), and 115–118 (GEGT). Glu116 is a Mg(2+) binding site. Residues 138–140 (TID), Arg175, 182–184 (MGR), Glu235, Arg272, and 278–281 (HLQR) each bind substrate. Asp140 functions as the Proton acceptor in the catalytic mechanism.

The protein belongs to the phosphofructokinase type A (PFKA) family. Mixed-substrate PFK group III subfamily. In terms of assembly, homodimer or homotetramer. It depends on Mg(2+) as a cofactor.

It localises to the cytoplasm. It catalyses the reaction beta-D-fructose 6-phosphate + ATP = beta-D-fructose 1,6-bisphosphate + ADP + H(+). Its pathway is carbohydrate degradation; glycolysis; D-glyceraldehyde 3-phosphate and glycerone phosphate from D-glucose: step 3/4. Its function is as follows. Catalyzes the phosphorylation of D-fructose 6-phosphate to fructose 1,6-bisphosphate by ATP, the first committing step of glycolysis. The polypeptide is ATP-dependent 6-phosphofructokinase (Chloroflexus aurantiacus (strain ATCC 29366 / DSM 635 / J-10-fl)).